Consider the following 397-residue polypeptide: Phosphoglycerate kinase (397 aa).

Residues 22–24 (DYN), R38, 61–64 (HLGR), R119, and R152 contribute to the substrate site. ATP contacts are provided by residues K203, G294, E325, and 351–354 (GGDT).

The protein belongs to the phosphoglycerate kinase family. As to quaternary structure, monomer.

The protein localises to the cytoplasm. The enzyme catalyses (2R)-3-phosphoglycerate + ATP = (2R)-3-phospho-glyceroyl phosphate + ADP. The protein operates within carbohydrate degradation; glycolysis; pyruvate from D-glyceraldehyde 3-phosphate: step 2/5. The chain is Phosphoglycerate kinase (pgk) from Aquifex aeolicus (strain VF5).